A 780-amino-acid polypeptide reads, in one-letter code: MEEKKTGAAAALALLNQKFPVADVIAGTKCERAIKWELTIGDDLKPKWTHSIVCVSIEKTPFAKGSCRTAHKLKDWSQPDQGLVGKFSTNKKTTRDSYFTDVLMQTFCAKWAEKFNEAKPPKPITFLPSYVYELIDHPPPYPVCGGEPFIEGDYKKHNNNSGYVSSDARNTPQSFSHFSYELSNHELLIVDIQGVNDFYTDPQIHTKSGEGFGEGNLGETGFHKFLQTHKCNPVCDFLKLKPINQSKKALLRGTLPVVQLMDFHDAIGLNGNGSGPKNNYDMNYFRNGGGAQQPISLDDEEKMLQEQLERIRAQQQQKSKPSPPLVKQPSGNNLHKQQSPSSPTSKPVPQIVKTPSQSNVVNKSPVSPPKENSNVKLEQDNINNNNSSISSNNDNSNNNNNNNDNINNSSNSSSVNSNSSSVSSSSSSSSSSSSSSTTNAAPISIQVSRNSPPPQQPIQPSSAAASASSTSSSNVPTPESTSTSSMEQTPDRSEFEKWDLTSIKNIDTVRGLQSECITGDSLRLYSGSNDGQIGVWDAVELKHVTNIKAHGKSIRAVIKRPGFDQNILTAGADSLVKEWDINTQQTIKEIKESNEVNTIFIQDNLLYTGCNDKTVKVWDMRSYECVKTLSGHTRAIKSVCAMGNLLFSGSNDQQIYVWNLATGTILTNFQGHEGWVKTLYAHNNMLYSGSHDETIRIWDLKTTRCVNTIKCKDRVETLHVTNQGIFAGSGDWLQVFSHDKYENLASLNTRSSILCLWRNQNQLFTGSLASNLKVWSWDKM.

Residues 40–243 (IGDDLKPKWT…VCDFLKLKPI (204 aa)) enclose the Alpha-type protein kinase domain. The tract at residues 310–495 (RIRAQQQQKS…MEQTPDRSEF (186 aa)) is disordered. Residues 337 to 350 (QQSPSSPTSKPVPQ) are compositionally biased toward low complexity. Residues 353–376 (KTPSQSNVVNKSPVSPPKENSNVK) show a composition bias toward polar residues. Over residues 380 to 436 (DNINNNNSSISSNNDNSNNNNNNNDNINNSSNSSSVNSNSSSVSSSSSSSSSSSSSS) the composition is skewed to low complexity. Polar residues predominate over residues 437–450 (TTNAAPISIQVSRN). A compositionally biased stretch (low complexity) spans 458–488 (IQPSSAAASASSTSSSNVPTPESTSTSSMEQ). WD repeat units follow at residues 507 to 546 (DTVRGLQSECITGDSLRLYSGSNDGQIGVWDAVELKHVTN), 549 to 589 (AHGK…TIKE), 591 to 628 (KESNEVNTIFIQDNLLYTGCNDKTVKVWDMRSYECVKT), 631 to 668 (GHTRAIKSVCAMGNLLFSGSNDQQIYVWNLATGTILTN), 671 to 708 (GHEGWVKTLYAHNNMLYSGSHDETIRIWDLKTTRCVNT), and 748 to 780 (NTRSSILCLWRNQNQLFTGSLASNLKVWSWDKM).

Belongs to the protein kinase superfamily. Alpha-type protein kinase family. ALPK subfamily. Interacts with myosin II heavy chain (mhcA). In terms of processing, autophosphorylated in vitro.

The protein resides in the cytoplasm. The protein localises to the cell cortex. It is found in the membrane. Its subcellular location is the cleavage furrow. It catalyses the reaction L-threonyl-[myosin heavy-chain] + ATP = O-phospho-L-threonyl-[myosin heavy-chain] + ADP + H(+). In terms of biological role, phosphorylates threonine at 'Thr-1823', 'Thr-1833' and 'Thr-2029' in the C-terminal tail region of myosin II heavy chain (mhcA). This phosphorylation is critical in actin-activated ATPase activity of the myosin and regulating the assembly and disassembly of myosin II filament. In vitro, catalytic domain phosphorylates mhcA, myelin basic protein, myosin regulatory light chain, casein and caldesmon. Drives the disassembly of myosin II filaments for efficient cytokinesis and recycling of myosin II that occurs during late cytokinesis. Can be activated in vitro by autophosphorylation. The polypeptide is Myosin heavy chain kinase C (mhkC) (Dictyostelium discoideum (Social amoeba)).